Here is a 618-residue protein sequence, read N- to C-terminus: 1-deoxy-D-xylulose-5-phosphate synthase (618 aa).

Thiamine diphosphate contacts are provided by residues H73 and G114–S116. D145 serves as a coordination point for Mg(2+). Thiamine diphosphate-binding positions include G146–A147, N174, Y284, and E364. N174 is a Mg(2+) binding site.

It belongs to the transketolase family. DXPS subfamily. As to quaternary structure, homodimer. Mg(2+) serves as cofactor. Requires thiamine diphosphate as cofactor.

The enzyme catalyses D-glyceraldehyde 3-phosphate + pyruvate + H(+) = 1-deoxy-D-xylulose 5-phosphate + CO2. It participates in metabolic intermediate biosynthesis; 1-deoxy-D-xylulose 5-phosphate biosynthesis; 1-deoxy-D-xylulose 5-phosphate from D-glyceraldehyde 3-phosphate and pyruvate: step 1/1. Functionally, catalyzes the acyloin condensation reaction between C atoms 2 and 3 of pyruvate and glyceraldehyde 3-phosphate to yield 1-deoxy-D-xylulose-5-phosphate (DXP). This chain is 1-deoxy-D-xylulose-5-phosphate synthase, found in Clostridium beijerinckii (strain ATCC 51743 / NCIMB 8052) (Clostridium acetobutylicum).